A 345-amino-acid chain; its full sequence is Nuclear egress protein 1 (345 aa).

A CCCH-type zinc finger spans residues 115-247; that stretch reads CISLSEMGYT…FVFKPGSPLH (133 aa).

This sequence belongs to the herpesviridae NEC1 protein family. In terms of assembly, forms a heterohexameric complex with NEC2. Interacts with capsid vertex specific component 2/CVC2; this interaction directs the capsid to the host inner nuclear membrane to initiate budding. Post-translationally, phosphorylated at serine residues in the N-terminus. This phosphorylation regulates the localization within the inner nuclear membrane.

It is found in the host nucleus inner membrane. In terms of biological role, plays an essential role in virion nuclear egress, the first step of virion release from infected cell. Within the host nucleus, NEC1 interacts with the newly formed capsid through the vertexes and directs it to the inner nuclear membrane by associating with NEC2. Induces the budding of the capsid at the inner nuclear membrane as well as its envelopment into the perinuclear space. There, the NEC1/NEC2 complex promotes the fusion of the enveloped capsid with the outer nuclear membrane and the subsequent release of the viral capsid into the cytoplasm where it will reach the secondary budding sites in the host Golgi or trans-Golgi network. This Psittacid herpesvirus 1 (isolate Amazon parrot/-/97-0001/1997) (PsHV-1) protein is Nuclear egress protein 1.